Here is a 275-residue protein sequence, read N- to C-terminus: 3-methyl-2-oxobutanoate hydroxymethyltransferase (275 aa).

D44 and D83 together coordinate Mg(2+). 3-methyl-2-oxobutanoate-binding positions include D44–S45, D83, and K113. E115 contributes to the Mg(2+) binding site. E182 (proton acceptor) is an active-site residue.

Belongs to the PanB family. As to quaternary structure, homodecamer; pentamer of dimers. Mg(2+) serves as cofactor.

It is found in the cytoplasm. It carries out the reaction 3-methyl-2-oxobutanoate + (6R)-5,10-methylene-5,6,7,8-tetrahydrofolate + H2O = 2-dehydropantoate + (6S)-5,6,7,8-tetrahydrofolate. Its pathway is cofactor biosynthesis; (R)-pantothenate biosynthesis; (R)-pantoate from 3-methyl-2-oxobutanoate: step 1/2. Functionally, catalyzes the reversible reaction in which hydroxymethyl group from 5,10-methylenetetrahydrofolate is transferred onto alpha-ketoisovalerate to form ketopantoate. This Enterococcus faecalis (strain ATCC 700802 / V583) protein is 3-methyl-2-oxobutanoate hydroxymethyltransferase.